Consider the following 201-residue polypeptide: Akirin-2 (201 aa).

A phosphoserine mark is found at Ser18 and Ser21. The Nuclear localization signal signature appears at 23–28 (KRRRCA). Ser55 is subject to Phosphoserine. An SYVS motif motif is present at residues 198–201 (SYVS).

The protein belongs to the akirin family. As to quaternary structure, homodimer. Interacts with IPO9; the interaction is direct. Associates with 20S and 26S proteasomes. Interacts with SMARCD1; promoting SWI/SNF complex recruitment. Interacts with NFKBIZ. Interacts with YWHAB. Post-translationally, polyubiquitinated. Polyubiquitination is dependent of UBR5 that extends pre-ubiquitinated AKIRIN2.

It is found in the nucleus. Its subcellular location is the cytoplasm. The protein localises to the membrane. Functionally, molecular adapter that acts as a bridge between a variety of multiprotein complexes, and which is involved in embryonic development, immunity, myogenesis and brain development. Plays a key role in nuclear protein degradation by promoting import of proteasomes into the nucleus: directly binds to fully assembled 20S proteasomes at one end and to nuclear import receptor IPO9 at the other end, bridging them together and mediating the import of pre-assembled proteasome complexes through the nuclear pore. Involved in innate immunity by regulating the production of interleukin-6 (IL6) downstream of Toll-like receptor (TLR): acts by bridging the NF-kappa-B inhibitor NFKBIZ and the SWI/SNF complex, leading to promote induction of IL6. Also involved in adaptive immunity by promoting B-cell activation. Involved in brain development: required for the survival and proliferation of cerebral cortical progenitor cells. Involved in myogenesis: required for skeletal muscle formation and skeletal development, possibly by regulating expression of muscle differentiation factors. Also plays a role in facilitating interdigital tissue regression during limb development. In Mus musculus (Mouse), this protein is Akirin-2.